A 212-amino-acid chain; its full sequence is Translation initiation factor IF-3 (212 aa).

It belongs to the IF-3 family. Monomer.

It is found in the cytoplasm. In terms of biological role, IF-3 binds to the 30S ribosomal subunit and shifts the equilibrium between 70S ribosomes and their 50S and 30S subunits in favor of the free subunits, thus enhancing the availability of 30S subunits on which protein synthesis initiation begins. The polypeptide is Translation initiation factor IF-3 (Synechococcus sp. (strain CC9311)).